The following is a 298-amino-acid chain: Cobalt-precorrin-5B C(1)-methyltransferase (298 aa).

This sequence belongs to the CbiD family.

It carries out the reaction Co-precorrin-5B + S-adenosyl-L-methionine = Co-precorrin-6A + S-adenosyl-L-homocysteine. The protein operates within cofactor biosynthesis; adenosylcobalamin biosynthesis; cob(II)yrinate a,c-diamide from sirohydrochlorin (anaerobic route): step 6/10. In terms of biological role, catalyzes the methylation of C-1 in cobalt-precorrin-5B to form cobalt-precorrin-6A. The polypeptide is Cobalt-precorrin-5B C(1)-methyltransferase (Archaeoglobus fulgidus (strain ATCC 49558 / DSM 4304 / JCM 9628 / NBRC 100126 / VC-16)).